The sequence spans 682 residues: Histone deacetylase 18 (682 aa).

Residues 59 to 382 (KVGLVYDETM…SLACVQVLLE (324 aa)) are histone deacetylase. H191 (proton donor/acceptor) is an active-site residue. Zn(2+)-binding residues include D231, H233, and D324. Positions 430–608 (SAERNSADAL…DKELQEDRSR (179 aa)) form a coiled coil.

This sequence belongs to the histone deacetylase family. HD type 2 subfamily. Zn(2+) serves as cofactor. As to expression, expressed in roots, stems, young rosette leaves, flowers and siliques.

Its subcellular location is the nucleus. The protein localises to the cytoplasm. It carries out the reaction N(6)-acetyl-L-lysyl-[histone] + H2O = L-lysyl-[histone] + acetate. Responsible for the deacetylation of lysine residues on the N-terminal part of the core histones (H2A, H2B, H3 and H4). Histone deacetylation gives a tag for epigenetic repression and plays an important role in transcriptional regulation, cell cycle progression and developmental events. Histone deacetylases act via the formation of large multiprotein complexes. Required for appropriate cellular patterning in the root epidermis. Involved in the differentiation of hair and non-hair cells in the root epidermis. Is not directly involved in the regulation of the expression of pattern genes. Regulates the transcription of certain kinase genes, which are components of a positional information relay system, by changing their histone acetylation status. The sequence is that of Histone deacetylase 18 from Arabidopsis thaliana (Mouse-ear cress).